The chain runs to 1281 residues: SCL-interrupting locus protein homolog (1281 aa).

6 stretches are compositionally biased toward polar residues: residues Val-390–Ser-401, Arg-461–Asn-475, His-528–His-560, Glu-567–Arg-592, Ser-770–Gln-790, and Gln-891–Glu-913. Disordered stretches follow at residues Val-390 to Arg-431, Lys-450 to Arg-592, Ala-765 to Gln-790, and Arg-879 to Asp-915.

It is found in the cytoplasm. The protein resides in the cytosol. Its subcellular location is the cytoskeleton. It localises to the microtubule organizing center. The protein localises to the centrosome. It is found in the centriole. In terms of biological role, plays an essential role in early embryonic development. Plays an important role in the regulation of centriole duplication. This is SCL-interrupting locus protein homolog (stil) from Xenopus laevis (African clawed frog).